The following is a 122-amino-acid chain: RING-box protein 1B (122 aa).

Over residues 1-23 (MAEEIEVEETEDFHDMDFNDEEP) the composition is skewed to acidic residues. Residues 1–28 (MAEEIEVEETEDFHDMDFNDEEPSCSGG) are disordered. Zn(2+) is bound by residues C57, C60, C68, C71, C82, C89, H91, H94, H96, C108, and D111. An RING-type zinc finger spans residues 57–112 (CAICRNHIMNLCIECQADPNANQDECTVAWGECNHAFHYHCIARWLKTRLVCPLDN).

Belongs to the RING-box family. In terms of assembly, part of a SCF complex consisting of Skpa (SKP1), Cul1, Roc1B and a F-box protein. In terms of tissue distribution, highly expressed in early embryos, and in pupae. Widely expressed in adult males, while it is weakly expressed in adult females.

The protein localises to the cytoplasm. Its subcellular location is the nucleus. It functions in the pathway protein modification; protein ubiquitination. Functionally, component of the SCF (SKP1-CUL1-F-box protein) E3 ubiquitin ligase complex, which mediates the ubiquitination and subsequent proteasomal degradation of target proteins. Through the RING-type zinc finger, seems to recruit the E2 ubiquitination enzyme to the complex and brings it into close proximity to the substrate. The protein is RING-box protein 1B (Roc1b) of Drosophila melanogaster (Fruit fly).